A 1416-amino-acid polypeptide reads, in one-letter code: DNA-directed RNA polymerase subunit beta (1416 aa).

It belongs to the RNA polymerase beta chain family. As to quaternary structure, in plastids the minimal PEP RNA polymerase catalytic core is composed of four subunits: alpha, beta, beta', and beta''. When a (nuclear-encoded) sigma factor is associated with the core the holoenzyme is formed, which can initiate transcription.

It localises to the plastid. The protein resides in the chloroplast. The enzyme catalyses RNA(n) + a ribonucleoside 5'-triphosphate = RNA(n+1) + diphosphate. In terms of biological role, DNA-dependent RNA polymerase catalyzes the transcription of DNA into RNA using the four ribonucleoside triphosphates as substrates. The polypeptide is DNA-directed RNA polymerase subunit beta (Oltmannsiellopsis viridis (Marine flagellate)).